The chain runs to 57 residues: Large ribosomal subunit protein uL30 (57 aa).

Belongs to the universal ribosomal protein uL30 family. Part of the 50S ribosomal subunit.

In Maridesulfovibrio salexigens (strain ATCC 14822 / DSM 2638 / NCIMB 8403 / VKM B-1763) (Desulfovibrio salexigens), this protein is Large ribosomal subunit protein uL30.